A 420-amino-acid polypeptide reads, in one-letter code: Phosphoglycerate kinase (420 aa).

Residues valine 24, aspartate 25, phenylalanine 26, asparagine 27, arginine 40, serine 63, histidine 64, glycine 66, arginine 67, leucine 122, arginine 123, histidine 170, and arginine 171 each contribute to the (2R)-3-phosphoglycerate site. Position 214 (glycine 214) interacts with ADP. Glycine 214 provides a ligand contact to CDP. Residues alanine 215 and lysine 216 each coordinate AMP. Position 215 (alanine 215) interacts with ATP. Position 215 (alanine 215) interacts with Mg(2+). Aspartate 219 provides a ligand contact to CDP. Aspartate 219 contributes to the Mg(2+) binding site. Lysine 220 provides a ligand contact to AMP. Lysine 220 lines the ATP pocket. Glycine 238 serves as a coordination point for ADP. Glycine 238 contributes to the CDP binding site. Glycine 239 and glycine 313 together coordinate AMP. ATP is bound by residues glycine 239 and glycine 313. CDP-binding residues include glycine 338 and phenylalanine 343. An ADP-binding site is contributed by phenylalanine 343. Glutamate 344 is a binding site for AMP. The ATP site is built by glutamate 344, aspartate 375, and threonine 376. Aspartate 375 contacts Mg(2+).

Belongs to the phosphoglycerate kinase family. In terms of assembly, monomer. Mg(2+) serves as cofactor.

The catalysed reaction is (2R)-3-phosphoglycerate + ATP = (2R)-3-phospho-glyceroyl phosphate + ADP. The protein operates within carbohydrate degradation; glycolysis; pyruvate from D-glyceraldehyde 3-phosphate: step 2/5. In Tetrahymena thermophila, this protein is Phosphoglycerate kinase (PGK).